We begin with the raw amino-acid sequence, 221 residues long: GTP cyclohydrolase 1 (221 aa).

Zn(2+) is bound by residues cysteine 111, histidine 114, and cysteine 182.

This sequence belongs to the GTP cyclohydrolase I family. In terms of assembly, homomer.

The catalysed reaction is GTP + H2O = 7,8-dihydroneopterin 3'-triphosphate + formate + H(+). The protein operates within cofactor biosynthesis; 7,8-dihydroneopterin triphosphate biosynthesis; 7,8-dihydroneopterin triphosphate from GTP: step 1/1. The polypeptide is GTP cyclohydrolase 1 (Erwinia tasmaniensis (strain DSM 17950 / CFBP 7177 / CIP 109463 / NCPPB 4357 / Et1/99)).